The following is a 198-amino-acid chain: Protoplast secreted protein 2 (198 aa).

Residues 1–21 (MPRVAIIIYTLYGHVAATAEA) form the signal peptide. One can recognise a Flavodoxin-like domain in the interval 22 to 191 (EKKGIEAAGG…QVHEIQGKTF (170 aa)).

The protein belongs to the WrbA family.

Its subcellular location is the secreted. The polypeptide is Protoplast secreted protein 2 (PST2) (Saccharomyces cerevisiae (strain ATCC 204508 / S288c) (Baker's yeast)).